The chain runs to 121 residues: Regulator of ribonuclease activity B (121 aa).

The protein belongs to the RraB family. Interacts with the C-terminal region of Rne.

The protein resides in the cytoplasm. Functionally, globally modulates RNA abundance by binding to RNase E (Rne) and regulating its endonucleolytic activity. Can modulate Rne action in a substrate-dependent manner by altering the composition of the degradosome. This chain is Regulator of ribonuclease activity B, found in Psychromonas ingrahamii (strain DSM 17664 / CCUG 51855 / 37).